A 303-amino-acid polypeptide reads, in one-letter code: Quinolinate synthase (303 aa).

2 residues coordinate iminosuccinate: His-24 and Ser-41. Residue Cys-86 coordinates [4Fe-4S] cluster. Residues 112–114 (YVN) and Ser-129 each bind iminosuccinate. Cys-172 provides a ligand contact to [4Fe-4S] cluster. Iminosuccinate is bound by residues 198–200 (HPE) and Thr-215. Position 260 (Cys-260) interacts with [4Fe-4S] cluster.

It belongs to the quinolinate synthase family. Type 2 subfamily. [4Fe-4S] cluster is required as a cofactor.

It localises to the cytoplasm. It carries out the reaction iminosuccinate + dihydroxyacetone phosphate = quinolinate + phosphate + 2 H2O + H(+). It participates in cofactor biosynthesis; NAD(+) biosynthesis; quinolinate from iminoaspartate: step 1/1. Its function is as follows. Catalyzes the condensation of iminoaspartate with dihydroxyacetone phosphate to form quinolinate. This is Quinolinate synthase from Alkaliphilus metalliredigens (strain QYMF).